A 146-amino-acid polypeptide reads, in one-letter code: Protein archease (146 aa).

3 residues coordinate Ca(2+): Asp-16, Asp-145, and Ile-146.

Belongs to the archease family.

Activates the tRNA-splicing ligase complex by facilitating the enzymatic turnover of catalytic subunit RtcB. Acts by promoting the guanylylation of RtcB, a key intermediate step in tRNA ligation. Can also alter the NTP specificity of RtcB such that ATP, dGTP or ITP is used efficiently. The sequence is that of Protein archease from Methanosarcina mazei (strain ATCC BAA-159 / DSM 3647 / Goe1 / Go1 / JCM 11833 / OCM 88) (Methanosarcina frisia).